Reading from the N-terminus, the 508-residue chain is GATA zinc finger domain-containing protein 13 (508 aa).

Disordered regions lie at residues 20–51 and 203–296; these read YSKN…INNN and MSII…PEIE. A compositionally biased stretch (low complexity) spans 23–51; the sequence is NNNNNNNNNNNNNINNNNNNNNNNNINNN. The segment covering 203 to 224 has biased composition (polar residues); sequence MSIIPSDNFPTPQLPLETNTDL. The span at 225–247 shows a compositional bias: low complexity; it reads NNTSDCSSTTFSSPPSSAFNSPN. Residues 248–266 are compositionally biased toward polar residues; the sequence is LQNDYTQPQNQKSQSSTIV. The segment covering 269–279 has biased composition (basic residues); it reads NSSKSKSKNNK. The segment at 327 to 354 adopts a GATA-type zinc-finger fold; it reads CSICKIKCSIYWRRILINEVRTSVCNAC. Residues 356–433 adopt a coiled-coil conformation; it reads LRTMKKTKKE…NNNNNNNNNN (78 aa). Low complexity predominate over residues 399-482; that stretch reads TTTTTTTTTS…NNNNNDNYND (84 aa). Residues 399–484 form a disordered region; that stretch reads TTTTTTTTTS…NNNDNYNDSI (86 aa).

The polypeptide is GATA zinc finger domain-containing protein 13 (gtaM) (Dictyostelium discoideum (Social amoeba)).